The primary structure comprises 130 residues: Small ribosomal subunit protein uS11 (130 aa).

The protein belongs to the universal ribosomal protein uS11 family. Part of the 30S ribosomal subunit. Interacts with proteins S7 and S18. Binds to IF-3.

Its function is as follows. Located on the platform of the 30S subunit, it bridges several disparate RNA helices of the 16S rRNA. Forms part of the Shine-Dalgarno cleft in the 70S ribosome. The sequence is that of Small ribosomal subunit protein uS11 from Prochlorococcus marinus subsp. pastoris (strain CCMP1986 / NIES-2087 / MED4).